We begin with the raw amino-acid sequence, 282 residues long: Heme oxygenase 1, chloroplastic (282 aa).

The transit peptide at 1 to 54 (MAYLAPISSSLSIFKNPQLSRFQFSSSSPNPLFLRPRIQILSMTMNKSPSLVVV) directs the protein to the chloroplast. Residue H86 coordinates heme b.

It belongs to the heme oxygenase family. In terms of tissue distribution, widely expressed.

It is found in the plastid. It localises to the chloroplast. It catalyses the reaction heme b + 3 reduced [NADPH--hemoprotein reductase] + 3 O2 = biliverdin IXalpha + CO + Fe(2+) + 3 oxidized [NADPH--hemoprotein reductase] + 3 H2O + H(+). Its activity is regulated as follows. Activated by ascorbate. Its function is as follows. Key enzyme in the synthesis of the chromophore of the phytochrome family of plant photoreceptors. Catalyzes the opening of the heme ring to form the open-chain tetrapyrrole biliverdin IX with the release of iron and carbon monoxide (CO). Produces specifically the biliverdin IX-alpha isomer. Can form complex with heme, is ferredoxin-dependent and its activity is increased in the presence of ascorbate. Plays a role in salt acclimation signaling. May affect the plastid-to-nucleus signaling pathway by perturbing tetrapyrrole synthesis. The plastid-to-nucleus signal plays an important role in the coordinated expression of both nuclear- and chloroplast-localized genes that encode photosynthesis-related proteins. In Arabidopsis thaliana (Mouse-ear cress), this protein is Heme oxygenase 1, chloroplastic (HO1).